The chain runs to 1562 residues: NAC-alpha domain-containing protein 1 (1562 aa).

Over residues 1–13 the composition is skewed to low complexity; that stretch reads MPGEAARAELLLP. 8 disordered regions span residues 1–24, 56–110, 131–226, 249–288, 327–365, 381–458, 503–941, and 953–1423; these read MPGE…RTDL, FLPS…TEAP, SPRA…ADGD, SGWG…SSSW, TPLS…LQSL, RDDT…GAYL, TPQA…EPLA, and GCAP…AMSK. Residues 195–208 are compositionally biased toward basic and acidic residues; sequence GDARDSEAELRDEL. Residues 275–287 are compositionally biased toward low complexity; sequence SSESSLSADSSSS. Over residues 331–340 the composition is skewed to acidic residues; that stretch reads PEEEEEEAVA. Positions 385-397 are enriched in low complexity; it reads SAASSDSDSASYA. 2 stretches are compositionally biased toward polar residues: residues 449-458 and 550-564; these read PQTSDRGAYL and QEET…SPQN. Residues 992-1007 are compositionally biased toward low complexity; that stretch reads PAALDQVQQDDPQPAA. Positions 1048-1074 are enriched in basic and acidic residues; the sequence is PGREACLEARAHTGDGAKPDSPQKETL. Ser-1068 bears the Phosphoserine mark. Low complexity-rich tracts occupy residues 1172–1182 and 1231–1241; these read APTSAPTSQQP and APGTLAGAALP. Over residues 1254–1264 the composition is skewed to acidic residues; that stretch reads PQEDSVEDEEP. Composition is skewed to low complexity over residues 1265 to 1284, 1298 to 1308, and 1335 to 1344; these read PGSL…AAAV, SLSPHSPLLSP, and QSPAGPQGLS. The span at 1348-1357 shows a compositional bias: acidic residues; it reads QQEDEDSLEE. Ser-1354 carries the phosphoserine modification. The NAC-A/B domain maps to 1411 to 1476; it reads SRSEKKARKA…AKIEDLSQQV (66 aa).

The protein belongs to the NAC-alpha family.

It is found in the cytoplasm. The protein resides in the nucleus. May prevent inappropriate targeting of non-secretory polypeptides to the endoplasmic reticulum (ER). May bind to nascent polypeptide chains as they emerge from the ribosome and block their interaction with the signal recognition particle (SRP), which normally targets nascent secretory peptides to the ER. May also reduce the inherent affinity of ribosomes for protein translocation sites in the ER membrane (M sites). The chain is NAC-alpha domain-containing protein 1 (NACAD) from Homo sapiens (Human).